Consider the following 256-residue polypeptide: Thiazole synthase (256 aa).

Residue lysine 95 is the Schiff-base intermediate with DXP of the active site. 1-deoxy-D-xylulose 5-phosphate contacts are provided by residues glycine 156, 182–183 (AG), and 204–205 (NT).

Belongs to the ThiG family. As to quaternary structure, homotetramer. Forms heterodimers with either ThiH or ThiS.

The protein localises to the cytoplasm. It catalyses the reaction [ThiS sulfur-carrier protein]-C-terminal-Gly-aminoethanethioate + 2-iminoacetate + 1-deoxy-D-xylulose 5-phosphate = [ThiS sulfur-carrier protein]-C-terminal Gly-Gly + 2-[(2R,5Z)-2-carboxy-4-methylthiazol-5(2H)-ylidene]ethyl phosphate + 2 H2O + H(+). It functions in the pathway cofactor biosynthesis; thiamine diphosphate biosynthesis. Catalyzes the rearrangement of 1-deoxy-D-xylulose 5-phosphate (DXP) to produce the thiazole phosphate moiety of thiamine. Sulfur is provided by the thiocarboxylate moiety of the carrier protein ThiS. In vitro, sulfur can be provided by H(2)S. This is Thiazole synthase from Klebsiella pneumoniae (strain 342).